The following is a 2670-amino-acid chain: Inositol 1,4,5-trisphosphate-gated calcium channel ITPR3 (2670 aa).

Topologically, residues 1–2233 are cytoplasmic; that stretch reads MNEMSSFLHI…YVEGASTGVL (2233 aa). MIR domains are found at residues 113 to 173, 174 to 224, 232 to 288, 295 to 372, and 378 to 434; these read GDVV…LRSN, GDNV…INLF, EEVL…VEVV, GGAG…LDPT, and DSFV…IVSV. The 1D-myo-inositol 1,4,5-trisphosphate site is built by arginine 266, leucine 269, and arginine 270. Residues arginine 503, lysine 507, arginine 510, tyrosine 567, arginine 568, and lysine 569 each contribute to the 1D-myo-inositol 1,4,5-trisphosphate site. Arginine 743 contacts Ca(2+). Phosphoserine occurs at positions 916 and 934. Ca(2+) is bound by residues glutamate 1122 and glutamate 1125. The segment covering 1138-1153 has biased composition (basic and acidic residues); that stretch reads EVEAGATKDKKERPSD. 2 disordered regions span residues 1138–1164 and 1807–1835; these read EVEA…HGEK and NMSD…SFSM. Serine 1813, serine 1832, and serine 1834 each carry phosphoserine. 2 residues coordinate Ca(2+): glutamate 1881 and glutamate 1945. Alanine 1995, glutamate 2148, and lysine 2151 together coordinate ATP. A helical membrane pass occupies residues 2234–2254; the sequence is GSPLISLLFWILICFSIAALF. The Extracellular segment spans residues 2255–2262; that stretch reads TKRYSVRP. Residues 2263 to 2283 form a helical membrane-spanning segment; that stretch reads LIVALILRSIYYLGIGPTLNI. Residues 2284–2292 lie on the Cytoplasmic side of the membrane; it reads LGALNLTNK. Residues 2293–2310 form a helical membrane-spanning segment; it reads IVFVVSFVGNRGTFIRGY. The Extracellular segment spans residues 2311-2324; the sequence is KAMVMDMEFLYHVG. A helical membrane pass occupies residues 2325-2345; the sequence is YILTSVLGLFAHELFYSILLF. Residues 2346–2367 lie on the Cytoplasmic side of the membrane; sequence DLIYREETLFNVIKSVTRNGRS. Residues 2368-2388 traverse the membrane as a helical segment; the sequence is ILLTALLALILVYLFSIVGFL. Over 2389 to 2495 the chain is Extracellular; that stretch reads FLKDDFILEV…ESLFPARVVY (107 aa). A disulfide bond links cysteine 2454 and cysteine 2460. A helical transmembrane segment spans residues 2496 to 2516; sequence DLLFFFIVIIIVLNLIFGVII. Topologically, residues 2517–2670 are cytoplasmic; it reads DTFADLRSEK…FVDVQNCMSR (154 aa). Residues cysteine 2537 and phenylalanine 2538 each contribute to the ATP site. Cysteine 2537 contacts Zn(2+). The Zn(2+) site is built by cysteine 2540 and histidine 2557. The ATP site is built by lysine 2559, histidine 2562, asparagine 2563, and methionine 2564. Position 2562 (histidine 2562) interacts with Zn(2+). Threonine 2580 is a Ca(2+) binding site. 2 positions are modified to phosphoserine: serine 2608 and serine 2669.

The protein belongs to the InsP3 receptor family. Homodimer. Homotetramer. Interacts with TRPC1, TRPC3, TRPC4. Interacts with TRPV4. Interacts with SIGMAR1. Found in a complex with AKT1 and PML; this interaction modulates IP3R3-phosphorylation and in turn ITPR3-dependent calcium release. Interacts with IRAG2 (via coiled-coil domain). Interacts with CABP1. Interacts with TMBIM4/LFG4. Interacts with CEMIP. Interacts with TESPA1. Interacts with TMEM203. Interacts with BOK; regulates ITPR3 expression. Interacts with BCL2L10. Interacts with CHGA and CHGB. In terms of processing, phosphorylated by AKT1 on serine and/or threonine residues.

The protein resides in the endoplasmic reticulum membrane. It localises to the cytoplasmic vesicle. Its subcellular location is the secretory vesicle membrane. It catalyses the reaction Ca(2+)(in) = Ca(2+)(out). Inositol 1,4,5-trisphosphate-gated calcium channel is regulated by cytosolic calcium in a biphasic manner. At low concentrations, cytosolic calcium binds at a high-affinity juxtamembrane domain (JD) calcium binding site, allowing ITPR3 to activate by escaping a low-energy resting state through an ensemble of preactivated states. At high cytosolic calcium concentrations, ITPR3 preferentially enters an inhibited state stabilized by calcium binding at a second, low-affinity cytoplasmic domain (CD) calcium binding site. Its function is as follows. Inositol 1,4,5-trisphosphate-gated calcium channel that, upon 1D-myo-inositol 1,4,5-trisphosphate binding, transports calcium from the endoplasmic reticulum lumen to cytoplasm, thus releasing the intracellular calcium and therefore participates in cellular calcium ion homeostasis. 1D-myo-inositol 1,4,5-trisphosphate binds to the ligand-free channel without altering its global conformation, yielding the low-energy resting state, then progresses through resting-to preactivated transitions to the higher energy preactivated state, which increases affinity for calcium, promoting binding of the low basal cytosolic calcium at the juxtamembrane domain (JD) site, favoring the transition through the ensemble of high-energy intermediate states along the trajectory to the fully-open activated state. Upon opening, releases calcium in the cytosol where it can bind to the low-affinity cytoplasmic domain (CD) site and stabilizes the inhibited state to terminate calcium release. The polypeptide is Inositol 1,4,5-trisphosphate-gated calcium channel ITPR3 (Mus musculus (Mouse)).